Reading from the N-terminus, the 245-residue chain is 8-amino-3,8-dideoxy-manno-octulosonate cytidylyltransferase (245 aa).

Belongs to the KdsB family.

Its subcellular location is the cytoplasm. It catalyses the reaction 8-amino-3,8-dideoxy-alpha-D-manno-octulosonate + CTP = CMP-8-amino-3,8-dideoxy-alpha-D-manno-oct-2-ulosonate + diphosphate. It participates in bacterial outer membrane biogenesis; lipopolysaccharide biosynthesis. Functionally, activates KDO8N (a required 8-carbon sugar) for incorporation into bacterial lipopolysaccharide in the Shewanella genus. This is 8-amino-3,8-dideoxy-manno-octulosonate cytidylyltransferase from Shewanella baltica (strain OS185).